We begin with the raw amino-acid sequence, 185 residues long: MATLPLSLIFAFKNRPKCVITRAQYVKVMAWQEVTAKRSNELGSPTRRKSSIQELVFLEDDVQALNEAFPQGEKADTSWAVTVLFYLAKLVFGILGLALSIIWLLHIIVFMLVNPPAFPFLNQVFIQLDSAWGLLGTTAFAIFCYYLIMSVISGEMHSIHPMKYQGTLMNSFLFNVAIILLCSTR.

At 1–89 the chain is on the cytoplasmic side; that stretch reads MATLPLSLIF…AVTVLFYLAK (89 aa). The chain crosses the membrane as a helical span at residues 90–110; that stretch reads LVFGILGLALSIIWLLHIIVF. Over 111–131 the chain is Extracellular; sequence MLVNPPAFPFLNQVFIQLDSA. The helical transmembrane segment at 132 to 152 threads the bilayer; it reads WGLLGTTAFAIFCYYLIMSVI. Topologically, residues 153-163 are cytoplasmic; it reads SGEMHSIHPMK. The chain crosses the membrane as a helical span at residues 164 to 184; the sequence is YQGTLMNSFLFNVAIILLCST. Residue Arg-185 is a topological domain, extracellular.

Belongs to the Casparian strip membrane proteins (CASP) family. As to quaternary structure, homodimer and heterodimers.

It localises to the cell membrane. The sequence is that of CASP-like protein SELMODRAFT_413556 from Selaginella moellendorffii (Spikemoss).